Reading from the N-terminus, the 557-residue chain is Formate--tetrahydrofolate ligase (557 aa).

Position 65–72 (Thr65–Thr72) interacts with ATP.

It belongs to the formate--tetrahydrofolate ligase family.

It carries out the reaction (6S)-5,6,7,8-tetrahydrofolate + formate + ATP = (6R)-10-formyltetrahydrofolate + ADP + phosphate. Its pathway is one-carbon metabolism; tetrahydrofolate interconversion. This chain is Formate--tetrahydrofolate ligase, found in Methylorubrum populi (strain ATCC BAA-705 / NCIMB 13946 / BJ001) (Methylobacterium populi).